Here is a 479-residue protein sequence, read N- to C-terminus: Hydrogenase-4 component D (479 aa).

15 helical membrane-spanning segments follow: residues 3–23 (NLALTTLLLPFIGALVVSFSP), 30–50 (WGVLFAALTTLCMLSLISAFY), 55–75 (VAVTLTLVNVGDVALFGLVID), 80–100 (LILFVVVFLGLLVTIYSTGYL), 117–137 (AFLLVFIGAMAGLVLSSTLLG), 168–188 (ALLITHIGSLGLYLAAATLFL), 208–228 (LVYGGILFAAWGKSAQLPMQA), 238–258 (TPISAYLHAASMVKVGVYIFA), 270–290 (VIGGVGMVMALVTILYGFLMY), 300–320 (LAWSTITQLGWMFFGLSLSIF), 330–350 (IAYIVNHAFAKSLFFLVAGAL), 369–389 (LPLPGVGFCVAALAITGVPPF), 390–410 (NGFFSKFPLFAAGFALSVEYW), 411–431 (ILLPAMILLMIESVASFAWFI), and 458–478 (LVLIVLIVMSLISSVIAATWL).

This sequence belongs to the complex I subunit 5 family.

Its subcellular location is the cell inner membrane. Possible component of hydrogenase 4. This Escherichia coli (strain K12) protein is Hydrogenase-4 component D.